Here is a 298-residue protein sequence, read N- to C-terminus: MDKKSSHPAGAARDILIELRNAGVYRDGRWLVRNVDLSVERGEIVTLIGQNGAGKSTAAKMALHILKPDEGMVSHKPGLRIGYVPQKINIDRTLPLSVERLMTLTGPLPRKEIDAALEAVGIAHLAKAETAHLSGGEFQRALMARALARKPDIMVLDEPVQGVDFSGEAALYELIARLRDDTSCGVLLISHDLHLVMAATDRVICLNGHVCCSGTPRDVTSSPEYVRLFGSRAVGPLAVYEHHHDHTHLPDGRVLYADGTTADPIAGSTMGPRGHCHVEDGHHHDHEHHHHEGGQPRA.

In terms of domain architecture, ABC transporter spans 17–232 (IELRNAGVYR…PEYVRLFGSR (216 aa)). ATP is bound at residue 49-56 (GQNGAGKS). The tract at residues 273–298 (RGHCHVEDGHHHDHEHHHHEGGQPRA) is disordered. Over residues 276–298 (CHVEDGHHHDHEHHHHEGGQPRA) the composition is skewed to basic and acidic residues.

This sequence belongs to the ABC transporter superfamily. Zinc importer (TC 3.A.1.15.5) family. In terms of assembly, the complex is composed of two ATP-binding proteins (ZnuC), two transmembrane proteins (ZnuB) and a solute-binding protein (ZnuA).

It localises to the cell inner membrane. It catalyses the reaction Zn(2+)(out) + ATP(in) + H2O(in) = Zn(2+)(in) + ADP(in) + phosphate(in) + H(+)(in). Its function is as follows. Part of the ABC transporter complex ZnuABC involved in zinc import. Responsible for energy coupling to the transport system. This Brucella melitensis biotype 1 (strain ATCC 23456 / CCUG 17765 / NCTC 10094 / 16M) protein is Zinc import ATP-binding protein ZnuC.